We begin with the raw amino-acid sequence, 429 residues long: D-amino acid dehydrogenase (429 aa).

Residue 3–17 (VLILGSGVIGVTSAW) participates in FAD binding.

It belongs to the DadA oxidoreductase family. It depends on FAD as a cofactor.

It carries out the reaction a D-alpha-amino acid + A + H2O = a 2-oxocarboxylate + AH2 + NH4(+). Its pathway is amino-acid degradation; D-alanine degradation; NH(3) and pyruvate from D-alanine: step 1/1. Oxidative deamination of D-amino acids. In Xanthomonas euvesicatoria pv. vesicatoria (strain 85-10) (Xanthomonas campestris pv. vesicatoria), this protein is D-amino acid dehydrogenase.